A 556-amino-acid polypeptide reads, in one-letter code: 2-succinyl-5-enolpyruvyl-6-hydroxy-3-cyclohexene-1-carboxylate synthase (556 aa).

Belongs to the TPP enzyme family. MenD subfamily. In terms of assembly, homodimer. The cofactor is Mg(2+). Mn(2+) serves as cofactor. Requires thiamine diphosphate as cofactor.

The catalysed reaction is isochorismate + 2-oxoglutarate + H(+) = 5-enolpyruvoyl-6-hydroxy-2-succinyl-cyclohex-3-ene-1-carboxylate + CO2. Its pathway is quinol/quinone metabolism; 1,4-dihydroxy-2-naphthoate biosynthesis; 1,4-dihydroxy-2-naphthoate from chorismate: step 2/7. It functions in the pathway quinol/quinone metabolism; menaquinone biosynthesis. In terms of biological role, catalyzes the thiamine diphosphate-dependent decarboxylation of 2-oxoglutarate and the subsequent addition of the resulting succinic semialdehyde-thiamine pyrophosphate anion to isochorismate to yield 2-succinyl-5-enolpyruvyl-6-hydroxy-3-cyclohexene-1-carboxylate (SEPHCHC). In Salmonella typhi, this protein is 2-succinyl-5-enolpyruvyl-6-hydroxy-3-cyclohexene-1-carboxylate synthase.